The primary structure comprises 679 residues: Translation initiation factor IF-2 (679 aa).

The tr-type G domain occupies Lys-178 to Lys-347. A G1 region spans residues Gly-187 to Thr-194. Position 187–194 (Gly-187–Thr-194) interacts with GTP. Residues Gly-212 to His-216 are G2. The interval Asp-233–Gly-236 is G3. Residues Asp-233–His-237 and Asn-287–Asp-290 contribute to the GTP site. The tract at residues Asn-287–Asp-290 is G4. The tract at residues Ser-323–Lys-325 is G5.

This sequence belongs to the TRAFAC class translation factor GTPase superfamily. Classic translation factor GTPase family. IF-2 subfamily.

Its subcellular location is the cytoplasm. One of the essential components for the initiation of protein synthesis. Protects formylmethionyl-tRNA from spontaneous hydrolysis and promotes its binding to the 30S ribosomal subunits. Also involved in the hydrolysis of GTP during the formation of the 70S ribosomal complex. The polypeptide is Translation initiation factor IF-2 (Clostridium perfringens (strain ATCC 13124 / DSM 756 / JCM 1290 / NCIMB 6125 / NCTC 8237 / Type A)).